The following is a 1053-amino-acid chain: Polyphosphate kinase (1053 aa).

Disordered regions lie at residues Leu23–Glu155, Val200–Lys245, and Asn302–Pro328. Low complexity predominate over residues Ser32–Ser50. Positions Val81–Ala102 are enriched in acidic residues. Residues Thr143 to Glu155 are compositionally biased toward polar residues. The span at Ser215–Ser239 shows a compositional bias: low complexity. Residue His800 is the Phosphohistidine intermediate of the active site. The disordered stretch occupies residues Arg1027 to Lys1053. Over residues Gln1036–Lys1046 the composition is skewed to polar residues.

It belongs to the polyphosphate kinase 1 (PPK1) family. Hexamer. May form higher oligomeric structures in the presence of ATP.

It localises to the vesicle. It carries out the reaction [phosphate](n) + ATP = [phosphate](n+1) + ADP. Catalyzes the reversible transfer of the terminal phosphate of ATP to form a long-chain polyphosphate (polyP). Produces polyP in a broad range of chain lengths (50-300 Pi residues). Involved in development (growth and fruiting body formation), sporulation, phagocytosis, cell division and the late stages of cytokinesis. This is Polyphosphate kinase (ppkA) from Dictyostelium discoideum (Social amoeba).